Here is a 354-residue protein sequence, read N- to C-terminus: DNA ligase C2 (354 aa).

Lysine 29 serves as the catalytic N6-AMP-lysine intermediate.

It belongs to the ATP-dependent DNA ligase family.

The catalysed reaction is ATP + (deoxyribonucleotide)n-3'-hydroxyl + 5'-phospho-(deoxyribonucleotide)m = (deoxyribonucleotide)n+m + AMP + diphosphate.. DNA ligase that seals nicks in double-stranded DNA during DNA replication, DNA recombination and DNA repair. Has weak intrinsic nick joining activities and accumulates DNA-adenylate. Acts as a backup for LigD in the Ku-LigD-dependent NHEJ pathway. In Mycolicibacterium smegmatis (strain ATCC 700084 / mc(2)155) (Mycobacterium smegmatis), this protein is DNA ligase C2 (ligC2).